We begin with the raw amino-acid sequence, 217 residues long: Adenylate kinase (217 aa).

10-15 is a binding site for ATP; the sequence is GAGKGT. Residues 30–59 form an NMP region; it reads STGDMFRAAMKEETPLGLEAKSYIDKGELV. AMP is bound by residues T31, R36, 57 to 59, 85 to 88, and Q92; these read ELV and GFPR. Positions 126 to 163 are LID; it reads GRRICSVCGTTYHLVFNPPKTPGVCDKDGGDLYQRADD. R127 is a binding site for ATP. Residues C130 and C133 each coordinate Zn(2+). 136–137 serves as a coordination point for ATP; it reads TY. Zn(2+) contacts are provided by C150 and D153. Residues R160 and R171 each coordinate AMP. Q199 serves as a coordination point for ATP.

The protein belongs to the adenylate kinase family. Monomer.

It is found in the cytoplasm. The enzyme catalyses AMP + ATP = 2 ADP. The protein operates within purine metabolism; AMP biosynthesis via salvage pathway; AMP from ADP: step 1/1. In terms of biological role, catalyzes the reversible transfer of the terminal phosphate group between ATP and AMP. Plays an important role in cellular energy homeostasis and in adenine nucleotide metabolism. This Bacillus velezensis (strain DSM 23117 / BGSC 10A6 / LMG 26770 / FZB42) (Bacillus amyloliquefaciens subsp. plantarum) protein is Adenylate kinase.